The chain runs to 185 residues: Elongation factor P (185 aa).

The protein belongs to the elongation factor P family.

Its subcellular location is the cytoplasm. The protein operates within protein biosynthesis; polypeptide chain elongation. Its function is as follows. Involved in peptide bond synthesis. Stimulates efficient translation and peptide-bond synthesis on native or reconstituted 70S ribosomes in vitro. Probably functions indirectly by altering the affinity of the ribosome for aminoacyl-tRNA, thus increasing their reactivity as acceptors for peptidyl transferase. This chain is Elongation factor P, found in Finegoldia magna (strain ATCC 29328 / DSM 20472 / WAL 2508) (Peptostreptococcus magnus).